The primary structure comprises 219 residues: MACRTLPSRRQEEETTKDLALKLPPGKPGGHLPSIDETRPIGPGPASRRGSLPGLHPSFSRRNSLAGPLVGPGGRRPSLGPVPPLGSRVSFSGLPLMLPRRMAPSYRLEPAPGEHWEAAGAQRALEAALTTQLNGVCYCGSEAGKLVQALCEQIHTRVRELNLPRYKLVCNVVLGPREGQGVHVVSRALWDAVHDGLASATFTNPSLFAVATVHAVYWE.

Positions 1–84 (MACRTLPSRR…RRPSLGPVPP (84 aa)) are disordered. Residues 9–20 (RRQEEETTKDLA) are compositionally biased toward basic and acidic residues. Ser64 carries the post-translational modification Phosphoserine.

It belongs to the dynein light chain Tctex-type family. In terms of assembly, interacts with ENG/endoglin, TGFBR2 and TGFBR3. Interacts with PPP1CC.

It localises to the cell projection. The protein resides in the cilium. The protein localises to the flagellum. It is found in the cytoplasmic vesicle. Its subcellular location is the secretory vesicle. It localises to the acrosome. The protein resides in the cytoplasm. The protein localises to the cytoskeleton. It is found in the cilium axoneme. Its subcellular location is the nucleus. It localises to the microtubule organizing center. This Mus musculus (Mouse) protein is Dynein light chain Tctex-type 4 (Dynlt4).